The sequence spans 182 residues: Probable peptidyl-prolyl cis-trans isomerase A (182 aa).

Residues 13 to 181 form the PPIase cyclophilin-type domain; sequence ATATATLHTN…DPVVIESITI (169 aa).

Belongs to the cyclophilin-type PPIase family.

Its subcellular location is the cytoplasm. It catalyses the reaction [protein]-peptidylproline (omega=180) = [protein]-peptidylproline (omega=0). Functionally, PPIases accelerate the folding of proteins. It catalyzes the cis-trans isomerization of proline imidic peptide bonds in oligopeptides. The sequence is that of Probable peptidyl-prolyl cis-trans isomerase A (ppiA) from Mycobacterium bovis (strain ATCC BAA-935 / AF2122/97).